A 356-amino-acid polypeptide reads, in one-letter code: tRNA N6-adenosine threonylcarbamoyltransferase (356 aa).

Residues His131 and His135 each contribute to the Fe cation site. Substrate is bound by residues 154–158 (LVSGG), Asp187, Gly200, and Asn289. Asp317 provides a ligand contact to Fe cation.

This sequence belongs to the KAE1 / TsaD family. Requires Fe(2+) as cofactor.

Its subcellular location is the cytoplasm. The catalysed reaction is L-threonylcarbamoyladenylate + adenosine(37) in tRNA = N(6)-L-threonylcarbamoyladenosine(37) in tRNA + AMP + H(+). In terms of biological role, required for the formation of a threonylcarbamoyl group on adenosine at position 37 (t(6)A37) in tRNAs that read codons beginning with adenine. Is involved in the transfer of the threonylcarbamoyl moiety of threonylcarbamoyl-AMP (TC-AMP) to the N6 group of A37, together with TsaE and TsaB. TsaD likely plays a direct catalytic role in this reaction. This chain is tRNA N6-adenosine threonylcarbamoyltransferase, found in Ruthia magnifica subsp. Calyptogena magnifica.